Consider the following 391-residue polypeptide: DNA repair protein NreA (391 aa).

A C4-type zinc finger spans residues 6–20 (CAECKGKLLCGRSKC). Residues 382 to 389 (QTSLASFF) carry the PIP motif motif.

This sequence belongs to the Nre family. In terms of assembly, interacts with the DNA polymerase sliding clamp (PCNA) via the PIP (PCNA-interacting peptide) motif.

In terms of biological role, involved in DNA damage repair. In Archaeoglobus fulgidus (strain ATCC 49558 / DSM 4304 / JCM 9628 / NBRC 100126 / VC-16), this protein is DNA repair protein NreA.